Here is a 310-residue protein sequence, read N- to C-terminus: Beta-ketoacyl-[acyl-carrier-protein] synthase III 1 (310 aa).

Catalysis depends on residues cysteine 112 and histidine 235. Positions 236 to 240 are ACP-binding; it reads QANIR. Residue asparagine 265 is part of the active site.

Belongs to the thiolase-like superfamily. FabH family. As to quaternary structure, homodimer.

The protein localises to the cytoplasm. The enzyme catalyses malonyl-[ACP] + acetyl-CoA + H(+) = 3-oxobutanoyl-[ACP] + CO2 + CoA. Its pathway is lipid metabolism; fatty acid biosynthesis. In terms of biological role, catalyzes the condensation reaction of fatty acid synthesis by the addition to an acyl acceptor of two carbons from malonyl-ACP. Catalyzes the first condensation reaction which initiates fatty acid synthesis and may therefore play a role in governing the total rate of fatty acid production. Possesses both acetoacetyl-ACP synthase and acetyl transacylase activities. Its substrate specificity determines the biosynthesis of branched-chain and/or straight-chain of fatty acids. The chain is Beta-ketoacyl-[acyl-carrier-protein] synthase III 1 from Bacillus anthracis.